The following is a 1199-amino-acid chain: DNA polymerase beta (1199 aa).

Belongs to the DNA polymerase type-B family.

It carries out the reaction DNA(n) + a 2'-deoxyribonucleoside 5'-triphosphate = DNA(n+1) + diphosphate. In terms of biological role, DNA-directed DNA polymerase involved in viral DNA replication. This Ornithodoros (relapsing fever ticks) protein is DNA polymerase beta.